A 243-amino-acid chain; its full sequence is MMKTLALYGLTLALFFLSGAHSAKITFTNNCPRTIWPGTLTSDQKPQLPNTGFVLASKASLTLGVQAPWKGRFWARTRCTTNSGKFTCETADCSTGQVACNGNGAIPPASLVEINIAANRGMDFYDVSLVDGYNLPVSVATRGGTGDCKATSCRANVNAVCPAELQVKGSDASVLACKSACTAFNQPQYCCTGAFDTARTCPATKYSRIFKQQCPQAYSYAYDDSTSTFTCSGAPDYVITFCP.

Positions 1 to 22 are cleaved as a signal peptide; that stretch reads MMKTLALYGLTLALFFLSGAHS. Cystine bridges form between Cys31–Cys242, Cys79–Cys88, Cys93–Cys100, Cys148–Cys231, Cys153–Cys214, Cys161–Cys177, Cys181–Cys190, and Cys191–Cys201.

The protein belongs to the thaumatin family.

It is found in the secreted. Its subcellular location is the extracellular space. The protein resides in the apoplast. Its function is as follows. Possesses antifungal activity. This chain is Thaumatin-like protein 1 (TL1), found in Castanea sativa (Sweet chestnut).